The sequence spans 211 residues: Thiamine-phosphate synthase (211 aa).

4-amino-2-methyl-5-(diphosphooxymethyl)pyrimidine-binding positions include 37–41 (QLRIK) and Asn69. 2 residues coordinate Mg(2+): Asp70 and Asp89. Position 108 (Ser108) interacts with 4-amino-2-methyl-5-(diphosphooxymethyl)pyrimidine. 134–136 (TQT) lines the 2-[(2R,5Z)-2-carboxy-4-methylthiazol-5(2H)-ylidene]ethyl phosphate pocket. Lys137 lines the 4-amino-2-methyl-5-(diphosphooxymethyl)pyrimidine pocket. 2-[(2R,5Z)-2-carboxy-4-methylthiazol-5(2H)-ylidene]ethyl phosphate is bound by residues Gly166 and 186 to 187 (IS).

Belongs to the thiamine-phosphate synthase family. Requires Mg(2+) as cofactor.

The catalysed reaction is 2-[(2R,5Z)-2-carboxy-4-methylthiazol-5(2H)-ylidene]ethyl phosphate + 4-amino-2-methyl-5-(diphosphooxymethyl)pyrimidine + 2 H(+) = thiamine phosphate + CO2 + diphosphate. It carries out the reaction 2-(2-carboxy-4-methylthiazol-5-yl)ethyl phosphate + 4-amino-2-methyl-5-(diphosphooxymethyl)pyrimidine + 2 H(+) = thiamine phosphate + CO2 + diphosphate. It catalyses the reaction 4-methyl-5-(2-phosphooxyethyl)-thiazole + 4-amino-2-methyl-5-(diphosphooxymethyl)pyrimidine + H(+) = thiamine phosphate + diphosphate. Its pathway is cofactor biosynthesis; thiamine diphosphate biosynthesis; thiamine phosphate from 4-amino-2-methyl-5-diphosphomethylpyrimidine and 4-methyl-5-(2-phosphoethyl)-thiazole: step 1/1. Functionally, condenses 4-methyl-5-(beta-hydroxyethyl)thiazole monophosphate (THZ-P) and 2-methyl-4-amino-5-hydroxymethyl pyrimidine pyrophosphate (HMP-PP) to form thiamine monophosphate (TMP). The chain is Thiamine-phosphate synthase from Shigella boydii serotype 4 (strain Sb227).